The chain runs to 172 residues: Small ribosomal subunit protein uS5c (172 aa).

Residues 15–78 (WEEKVVQVKR…TDAKKHIINV (64 aa)) enclose the S5 DRBM domain.

The protein belongs to the universal ribosomal protein uS5 family. Part of the 30S ribosomal subunit. Contacts protein S4.

The protein resides in the plastid. The protein localises to the chloroplast. Functionally, with S4 and S12 plays an important role in translational accuracy. The polypeptide is Small ribosomal subunit protein uS5c (rps5) (Gracilaria tenuistipitata var. liui (Red alga)).